A 244-amino-acid polypeptide reads, in one-letter code: NAD(P)H-quinone oxidoreductase subunit K (244 aa).

The [4Fe-4S] cluster site is built by C60, C61, C125, and C156. The disordered stretch occupies residues 213-244; the sequence is KSEKSIESSKLNPVEESSENIYETNSIDEVIK. Residues 231–244 show a composition bias toward polar residues; the sequence is ENIYETNSIDEVIK.

Belongs to the complex I 20 kDa subunit family. NDH-1 can be composed of about 15 different subunits; different subcomplexes with different compositions have been identified which probably have different functions. The cofactor is [4Fe-4S] cluster.

The protein localises to the cellular thylakoid membrane. It catalyses the reaction a plastoquinone + NADH + (n+1) H(+)(in) = a plastoquinol + NAD(+) + n H(+)(out). It carries out the reaction a plastoquinone + NADPH + (n+1) H(+)(in) = a plastoquinol + NADP(+) + n H(+)(out). Functionally, NDH-1 shuttles electrons from an unknown electron donor, via FMN and iron-sulfur (Fe-S) centers, to quinones in the respiratory and/or the photosynthetic chain. The immediate electron acceptor for the enzyme in this species is believed to be plastoquinone. Couples the redox reaction to proton translocation, and thus conserves the redox energy in a proton gradient. Cyanobacterial NDH-1 also plays a role in inorganic carbon-concentration. In Prochlorococcus marinus subsp. pastoris (strain CCMP1986 / NIES-2087 / MED4), this protein is NAD(P)H-quinone oxidoreductase subunit K.